The primary structure comprises 136 residues: Protein PsiE (136 aa).

4 helical membrane-spanning segments follow: residues 15–35 (ILQN…VVFL), 55–75 (YELV…ALIV), 83–103 (HFPL…LIIV), and 108–128 (PMDV…LWLC).

The protein belongs to the PsiE family.

It localises to the cell inner membrane. The chain is Protein PsiE from Salmonella gallinarum (strain 287/91 / NCTC 13346).